The chain runs to 332 residues: Protein phosphatase PTC7 homolog fig (332 aa).

The PPM-type phosphatase domain maps to 70-325; sequence KPCSPRERAN…DDITLILASV (256 aa). The Mn(2+) site is built by Asp-102, Gly-103, and Asp-247.

The protein belongs to the PP2C family. The cofactor is Mg(2+). Requires Mn(2+) as cofactor.

It carries out the reaction O-phospho-L-seryl-[protein] + H2O = L-seryl-[protein] + phosphate. It catalyses the reaction O-phospho-L-threonyl-[protein] + H2O = L-threonyl-[protein] + phosphate. In Drosophila ananassae (Fruit fly), this protein is Protein phosphatase PTC7 homolog fig.